Here is a 298-residue protein sequence, read N- to C-terminus: N-acetylmuramic acid 6-phosphate etherase (298 aa).

The SIS domain occupies Ile55 to Lys218. Glu83 (proton donor) is an active-site residue. Glu114 is a catalytic residue.

The protein belongs to the GCKR-like family. MurNAc-6-P etherase subfamily. In terms of assembly, homodimer.

It catalyses the reaction N-acetyl-D-muramate 6-phosphate + H2O = N-acetyl-D-glucosamine 6-phosphate + (R)-lactate. It functions in the pathway amino-sugar metabolism; 1,6-anhydro-N-acetylmuramate degradation. Its pathway is amino-sugar metabolism; N-acetylmuramate degradation. It participates in cell wall biogenesis; peptidoglycan recycling. Its function is as follows. Specifically catalyzes the cleavage of the D-lactyl ether substituent of MurNAc 6-phosphate, producing GlcNAc 6-phosphate and D-lactate. Together with AnmK, is also required for the utilization of anhydro-N-acetylmuramic acid (anhMurNAc) either imported from the medium or derived from its own cell wall murein, and thus plays a role in cell wall recycling. This is N-acetylmuramic acid 6-phosphate etherase from Escherichia coli O6:K15:H31 (strain 536 / UPEC).